A 394-amino-acid chain; its full sequence is Aspergillopepsin-1 (394 aa).

An N-terminal signal peptide occupies residues 1–20 (MVVFSKTAALVLGLSTAVSA). Residues 21–69 (APAPTRKGFTINQIARPANKTRTVNLPGLYARSLAKFGGTVPQSVKEAA) constitute a propeptide, activation peptide. The Peptidase A1 domain maps to 85 to 391 (YLTPVTVGKS…NSEGPKLGFA (307 aa)). Residue Asp101 is part of the active site. 2 O-linked (Man...) serine glycosylation sites follow: Ser129 and Ser304. Cys319 and Cys354 are oxidised to a cystine.

It belongs to the peptidase A1 family. In terms of assembly, monomer.

It localises to the secreted. The enzyme catalyses Hydrolysis of proteins with broad specificity. Generally favors hydrophobic residues in P1 and P1', but also accepts Lys in P1, which leads to activation of trypsinogen. Does not clot milk.. Its function is as follows. Secreted aspartic endopeptidase that allows assimilation of proteinaceous substrates. The scissile peptide bond is attacked by a nucleophilic water molecule activated by two aspartic residues in the active site. Shows a broad primary substrate specificity. Favors hydrophobic residues at the P1 and P1' positions, but also accepts a lysine residue in the P1 position, leading to the activation of trypsinogen and chymotrypsinogen A. This is Aspergillopepsin-1 (pepA) from Aspergillus phoenicis (Aspergillus saitoi).